The primary structure comprises 67 residues: Large ribosomal subunit protein bL35 (67 aa).

The segment at 1-20 (MPKLKTKSGAKKRFVPKKSG) is disordered.

This sequence belongs to the bacterial ribosomal protein bL35 family.

This Anaeromyxobacter dehalogenans (strain 2CP-1 / ATCC BAA-258) protein is Large ribosomal subunit protein bL35.